The following is a 256-amino-acid chain: tRNA-cytidine(32) 2-sulfurtransferase (256 aa).

A PP-loop motif motif is present at residues 35-40; the sequence is SGGKDS. [4Fe-4S] cluster-binding residues include Cys-110, Cys-113, and Cys-201.

Belongs to the TtcA family. Homodimer. Mg(2+) serves as cofactor. [4Fe-4S] cluster is required as a cofactor.

Its subcellular location is the cytoplasm. It carries out the reaction cytidine(32) in tRNA + S-sulfanyl-L-cysteinyl-[cysteine desulfurase] + AH2 + ATP = 2-thiocytidine(32) in tRNA + L-cysteinyl-[cysteine desulfurase] + A + AMP + diphosphate + H(+). The protein operates within tRNA modification. Its function is as follows. Catalyzes the ATP-dependent 2-thiolation of cytidine in position 32 of tRNA, to form 2-thiocytidine (s(2)C32). The sulfur atoms are provided by the cysteine/cysteine desulfurase (IscS) system. The chain is tRNA-cytidine(32) 2-sulfurtransferase from Coxiella burnetii (strain RSA 331 / Henzerling II).